Reading from the N-terminus, the 339-residue chain is Glycerol-3-phosphate dehydrogenase [NAD(P)+] (339 aa).

4 residues coordinate NADPH: Ser15, Trp16, His36, and Lys110. Sn-glycerol 3-phosphate-binding residues include Lys110, Gly144, and Ser146. Residue Ala148 coordinates NADPH. Residues Lys199, Asp252, Ser262, Arg263, and Asn264 each contribute to the sn-glycerol 3-phosphate site. Lys199 serves as the catalytic Proton acceptor. Residue Arg263 coordinates NADPH. NADPH is bound by residues Val287 and Glu289.

The protein belongs to the NAD-dependent glycerol-3-phosphate dehydrogenase family.

The protein localises to the cytoplasm. It carries out the reaction sn-glycerol 3-phosphate + NAD(+) = dihydroxyacetone phosphate + NADH + H(+). It catalyses the reaction sn-glycerol 3-phosphate + NADP(+) = dihydroxyacetone phosphate + NADPH + H(+). The protein operates within membrane lipid metabolism; glycerophospholipid metabolism. Catalyzes the reduction of the glycolytic intermediate dihydroxyacetone phosphate (DHAP) to sn-glycerol 3-phosphate (G3P), the key precursor for phospholipid synthesis. The sequence is that of Glycerol-3-phosphate dehydrogenase [NAD(P)+] from Desulfotalea psychrophila (strain LSv54 / DSM 12343).